A 342-amino-acid chain; its full sequence is Protein-glutamate methylesterase/protein-glutamine glutaminase 1 (342 aa).

Residues 3-121 form the Response regulatory domain; sequence RVLVIDDSLF…NIREIGGELK (119 aa). Position 54 is a 4-aspartylphosphate (D54). Positions 141–340 constitute a CheB-type methylesterase domain; it reads DSNARNVVLI…EKIVETIRAM (200 aa). Active-site residues include S153, H180, and D282.

Belongs to the CheB family. Phosphorylated by CheA. Phosphorylation of the N-terminal regulatory domain activates the methylesterase activity.

Its subcellular location is the cytoplasm. It catalyses the reaction [protein]-L-glutamate 5-O-methyl ester + H2O = L-glutamyl-[protein] + methanol + H(+). It carries out the reaction L-glutaminyl-[protein] + H2O = L-glutamyl-[protein] + NH4(+). Involved in chemotaxis. Part of a chemotaxis signal transduction system that modulates chemotaxis in response to various stimuli. Catalyzes the demethylation of specific methylglutamate residues introduced into the chemoreceptors (methyl-accepting chemotaxis proteins or MCP) by CheR. Also mediates the irreversible deamidation of specific glutamine residues to glutamic acid. This is Protein-glutamate methylesterase/protein-glutamine glutaminase 1 from Methanospirillum hungatei JF-1 (strain ATCC 27890 / DSM 864 / NBRC 100397 / JF-1).